The sequence spans 191 residues: Large ribosomal subunit protein uL3 (191 aa).

The interval 119-138 (AAHGSRFHRRPGSIGNREWP) is disordered.

This sequence belongs to the universal ribosomal protein uL3 family. Part of the 50S ribosomal subunit. Forms a cluster with proteins L14 and L19.

In terms of biological role, one of the primary rRNA binding proteins, it binds directly near the 3'-end of the 23S rRNA, where it nucleates assembly of the 50S subunit. The protein is Large ribosomal subunit protein uL3 (rplC) of Helicobacter pylori (strain ATCC 700392 / 26695) (Campylobacter pylori).